The primary structure comprises 138 residues: Putative pre-16S rRNA nuclease (138 aa).

Belongs to the YqgF nuclease family.

The protein resides in the cytoplasm. Functionally, could be a nuclease involved in processing of the 5'-end of pre-16S rRNA. This is Putative pre-16S rRNA nuclease from Bacteroides fragilis (strain ATCC 25285 / DSM 2151 / CCUG 4856 / JCM 11019 / LMG 10263 / NCTC 9343 / Onslow / VPI 2553 / EN-2).